Consider the following 466-residue polypeptide: Asparagine--tRNA ligase (466 aa).

It belongs to the class-II aminoacyl-tRNA synthetase family. Homodimer.

Its subcellular location is the cytoplasm. It carries out the reaction tRNA(Asn) + L-asparagine + ATP = L-asparaginyl-tRNA(Asn) + AMP + diphosphate + H(+). In Buchnera aphidicola subsp. Acyrthosiphon pisum (strain APS) (Acyrthosiphon pisum symbiotic bacterium), this protein is Asparagine--tRNA ligase.